We begin with the raw amino-acid sequence, 330 residues long: Putative quinone oxidoreductase YhfP (330 aa).

Residues Y45, 160–163, 182–184, R202, L248, I262, S273, and N320 contribute to the NADP(+) site; these read TGGV and TGN.

Belongs to the zinc-containing alcohol dehydrogenase family. Quinone oxidoreductase subfamily. As to quaternary structure, homodimer, or homotetramer.

Its subcellular location is the cytoplasm. The chain is Putative quinone oxidoreductase YhfP (yhfP) from Bacillus subtilis (strain 168).